Reading from the N-terminus, the 182-residue chain is ATP-dependent protease subunit HslV (182 aa).

The active site involves T10. Residues A166, C169, and S172 each contribute to the Na(+) site.

It belongs to the peptidase T1B family. HslV subfamily. A double ring-shaped homohexamer of HslV is capped on each side by a ring-shaped HslU homohexamer. The assembly of the HslU/HslV complex is dependent on binding of ATP.

The protein resides in the cytoplasm. It carries out the reaction ATP-dependent cleavage of peptide bonds with broad specificity.. Its activity is regulated as follows. Allosterically activated by HslU binding. Its function is as follows. Protease subunit of a proteasome-like degradation complex believed to be a general protein degrading machinery. In Rickettsia peacockii (strain Rustic), this protein is ATP-dependent protease subunit HslV.